Reading from the N-terminus, the 362-residue chain is Resuscitation-promoting factor RpfB (362 aa).

Residues 1–22 (MLRGVVGAFLVSLTVAGSYAVA) form the signal peptide. A G5 domain is found at 192 to 272 (VTRMRIEKVT…NGVLRVGAKP (81 aa)).

Belongs to the transglycosylase family. Rpf subfamily.

Factor that stimulates resuscitation of dormant cells. Has peptidoglycan (PG) hydrolytic activity. Active in the pM concentration range. Has little to no effect on actively-growing cells. PG fragments could either directly activate the resuscitation pathway of dormant bacteria or serve as a substrate for endogenous Rpf, resulting in low molecular weight products with resuscitation activity. The protein is Resuscitation-promoting factor RpfB (rpfB) of Mycolicibacterium smegmatis (strain ATCC 700084 / mc(2)155) (Mycobacterium smegmatis).